The primary structure comprises 1534 residues: Alpha-2-macroglobulin homolog (1534 aa).

Positions 1–38 are cleaved as a signal peptide; sequence MDTQRFQSQFHWHLSFKFSGAIAACLSLSLVGTGLANA.

It belongs to the protease inhibitor I39 (alpha-2-macroglobulin) family. Bacterial alpha-2-macroglobulin subfamily.

In Escherichia coli O157:H7, this protein is Alpha-2-macroglobulin homolog (yfaS).